The chain runs to 547 residues: MASRRLLSSFLRSSTRRSLRPSFSNPRPSFLTSYCSSPASILRRYATAAPAKEPAASKPAGTAGTGKGTITDEKTGAGAIGQVCQIIGAVVDVKFEEGLPPIMTALEVIDFEIRLVLEVAPSLGENTVRTIAMDGTEGLVRGQKVLNTGAPITIPVGRATLGRIINVIGEPIDHRGEIKTDQYLPIHREAPTFVDQATEQQILVTGIKVVDLLAPYQKGGKIGLFGGDWVGKTVLIMELINNVAKAHAVFAGVGERTREGNDLYKEMMESGVIKLGDQQAESKCALVYGQMNEPPGSRARVGLTGLTVAEHFRDAEGEDVLLFVDKRFRFTQANSEVSALLGRIPSAVGYQPTLATDLGGLQERITTTKKGSITSVQAIYVPADDLTDPAPATTFAHLDATTVLSRQISELGIYPAVDPLDSTSRMLTPESGEEHYNTARGVQKVLQNYKNLQDIIAILGMDELSEDDKLTVARARKIQRFLSQPFHVAEIFTGAPGKYVELKECVTSFQGVLDGKYDDLPEQSFYMLGGIEEVIAKAEKMAKENPQ.

The transit peptide at 1–45 directs the protein to the mitochondrion; sequence MASRRLLSSFLRSSTRRSLRPSFSNPRPSFLTSYCSSPASILRRY. Residues 52 to 62 are compositionally biased toward low complexity; the sequence is KEPAASKPAGT. The disordered stretch occupies residues 52–74; the sequence is KEPAASKPAGTAGTGKGTITDEK. 226–233 serves as a coordination point for ATP; it reads GGDWVGKT.

This sequence belongs to the ATPase alpha/beta chains family. As to quaternary structure, F-type ATPases have 2 components, CF(1) - the catalytic core - and CF(0) - the membrane proton channel. CF(1) has five subunits: alpha(3), beta(3), gamma(1), delta(1), epsilon(1). CF(0) has three main subunits: a, b and c.

Its subcellular location is the mitochondrion. It localises to the mitochondrion inner membrane. The catalysed reaction is ATP + H2O + 4 H(+)(in) = ADP + phosphate + 5 H(+)(out). Its function is as follows. Mitochondrial membrane ATP synthase (F(1)F(0) ATP synthase or Complex V) produces ATP from ADP in the presence of a proton gradient across the membrane which is generated by electron transport complexes of the respiratory chain. F-type ATPases consist of two structural domains, F(1) - containing the extramembraneous catalytic core, and F(0) - containing the membrane proton channel, linked together by a central stalk and a peripheral stalk. During catalysis, ATP synthesis in the catalytic domain of F(1) is coupled via a rotary mechanism of the central stalk subunits to proton translocation. Subunits alpha and beta form the catalytic core in F(1). Rotation of the central stalk against the surrounding alpha(3)beta(3) subunits leads to hydrolysis of ATP in three separate catalytic sites on the beta subunits. The polypeptide is ATP synthase subunit beta, mitochondrial (ATPB) (Daucus carota (Wild carrot)).